The following is a 921-amino-acid chain: Isoleucine--tRNA ligase (921 aa).

Residues 57–67 carry the 'HIGH' region motif; the sequence is PYANGDIHMGH. Position 552 (E552) interacts with L-isoleucyl-5'-AMP. The 'KMSKS' region motif lies at 593–597; it reads KMSKS. K596 serves as a coordination point for ATP. Positions 888, 891, 908, and 911 each coordinate Zn(2+).

The protein belongs to the class-I aminoacyl-tRNA synthetase family. IleS type 1 subfamily. Monomer. Requires Zn(2+) as cofactor.

The protein localises to the cytoplasm. It carries out the reaction tRNA(Ile) + L-isoleucine + ATP = L-isoleucyl-tRNA(Ile) + AMP + diphosphate. Its function is as follows. Catalyzes the attachment of isoleucine to tRNA(Ile). As IleRS can inadvertently accommodate and process structurally similar amino acids such as valine, to avoid such errors it has two additional distinct tRNA(Ile)-dependent editing activities. One activity is designated as 'pretransfer' editing and involves the hydrolysis of activated Val-AMP. The other activity is designated 'posttransfer' editing and involves deacylation of mischarged Val-tRNA(Ile). The protein is Isoleucine--tRNA ligase of Bacillus cereus (strain AH187).